Here is a 945-residue protein sequence, read N- to C-terminus: Xylanolytic transcriptional activator xlnR (945 aa).

Disordered stretches follow at residues 1–33 (MSTP…TVGL) and 53–74 (AAGT…MSHA). The segment covering 14–24 (SPFSSGSQSTG) has biased composition (low complexity). Positions 125–151 (CDQCNQLRTKCDGQHPCAHCIEFGLTC) form a DNA-binding region, zn(2)-C6 fungal-type. Disordered stretches follow at residues 172-251 (AAAA…PSLG) and 559-601 (PPNV…INVT). 2 stretches are compositionally biased toward polar residues: residues 177-188 (HGSNGHSGQANA) and 218-251 (ISSQ…PSLG). A compositionally biased stretch (basic and acidic residues) spans 565 to 581 (ARQDGERDGDGEADRRH).

The protein belongs to the xlnR/xlr1 family.

Its subcellular location is the nucleus. Its function is as follows. Transcriptional activator of the xylanolytic system. Involved in the regulation of extracellular cellulolytic and xylanolytic genes and in the regulation of the intracellular activities of D-xylose catabolic genes in the pentose catabolic pathway (PCP) in response to the presence of D-xylose. The chain is Xylanolytic transcriptional activator xlnR (xlnR) from Aspergillus kawachii (White koji mold).